The chain runs to 672 residues: Hydroxyproline O-galactosyltransferase GALT5 (672 aa).

Residues 1–28 (MKKPKLSKVEKIDKIDLFSSLWKQRSVR) lie on the Cytoplasmic side of the membrane. A helical; Signal-anchor for type II membrane protein transmembrane segment spans residues 29–49 (VIMAIGFLYLVIVSVEIPLVF). The Lumenal segment spans residues 50 to 672 (KSWSSSSVPL…QNKPECCNMR (623 aa)). The region spanning 191–392 (KLMELPCGLT…DIDVHSVFVA (202 aa)) is the Galectin domain. 2 N-linked (GlcNAc...) asparagine glycosylation sites follow: asparagine 306 and asparagine 620.

Belongs to the glycosyltransferase 31 family. Mn(2+) serves as cofactor. In terms of tissue distribution, expressed in juvenile leaves, stems, cauline leaves and siliques.

The protein resides in the golgi apparatus membrane. It participates in protein modification; protein glycosylation. Its function is as follows. Possesses hydroxyproline O-galactosyltransferase activity. Transfers galactose from UDP-galactose to hydroxyproline residues in the arabinogalactan proteins (AGPs). Is specific for AGPs containing non-contiguous peptidyl hydroxyproline residues. Utilizes UDP-galactose solely as sugar donor. The addition of galactose onto the peptidyl hydroxyproline residues in AGP core proteins represents the first committed step in arabinogalactan polysaccharide addition. AGP glycans play essential roles in both vegetative and reproductive plant growth. This chain is Hydroxyproline O-galactosyltransferase GALT5, found in Arabidopsis thaliana (Mouse-ear cress).